A 297-amino-acid polypeptide reads, in one-letter code: 4-hydroxy-tetrahydrodipicolinate synthase (297 aa).

T49 is a pyruvate binding site. Residue Y137 is the Proton donor/acceptor of the active site. Residue K165 is the Schiff-base intermediate with substrate of the active site. I208 is a pyruvate binding site.

Belongs to the DapA family. In terms of assembly, homotetramer; dimer of dimers.

It localises to the cytoplasm. It carries out the reaction L-aspartate 4-semialdehyde + pyruvate = (2S,4S)-4-hydroxy-2,3,4,5-tetrahydrodipicolinate + H2O + H(+). It participates in amino-acid biosynthesis; L-lysine biosynthesis via DAP pathway; (S)-tetrahydrodipicolinate from L-aspartate: step 3/4. Catalyzes the condensation of (S)-aspartate-beta-semialdehyde [(S)-ASA] and pyruvate to 4-hydroxy-tetrahydrodipicolinate (HTPA). This is 4-hydroxy-tetrahydrodipicolinate synthase from Gluconacetobacter diazotrophicus (strain ATCC 49037 / DSM 5601 / CCUG 37298 / CIP 103539 / LMG 7603 / PAl5).